The following is a 173-amino-acid chain: MPTPKKGPRLASSPAHERLMLANMATSLFQNGRITTTLPKAKRLRPLAERLITFAKRGDLHSRRRVMRVIRNKSVVHILFTQIAEQMEQREGGYTRIVKIAPRVGDAAPAAVIELVTEPVAKKAVVKEAEAAAKVAEEEAPAVEAEATEATEAPVEEAAAVEAEAPADAEKAE.

A disordered region spans residues 136–173 (AEEEAPAVEAEATEATEAPVEEAAAVEAEAPADAEKAE). The span at 138-149 (EEAPAVEAEATE) shows a compositional bias: acidic residues. The span at 150–166 (ATEAPVEEAAAVEAEAP) shows a compositional bias: low complexity.

Belongs to the bacterial ribosomal protein bL17 family. As to quaternary structure, part of the 50S ribosomal subunit. Contacts protein L32.

The chain is Large ribosomal subunit protein bL17 from Bifidobacterium longum subsp. infantis (strain ATCC 15697 / DSM 20088 / JCM 1222 / NCTC 11817 / S12).